The primary structure comprises 250 residues: Keratin-associated protein 9-1 (250 aa).

Repeat copies occupy residues 8 to 12 (CCQPT), 13 to 17 (CCRTT), 18 to 22 (CCRTT), 37 to 41 (CCQPS), 42 to 46 (CCVPS), 51 to 55 (CCHPT), 56 to 60 (CCQNT), 61 to 65 (CCRTT), 66 to 70 (CCQPT), 75 to 79 (CCQPS), 80 to 84 (CCSTP), 85 to 89 (CCQPT), 90 to 94 (CCGSS), 95 to 99 (CCGQT), 105 to 109 (CCQPI), 114 to 117 (CCQP), 118 to 121 (CCHP), 133 to 137 (CCQPT), 138 to 142 (CCQPT), 143 to 147 (CCRNT), 153 to 157 (CCGSS), 162 to 166 (CCHPT), 167 to 171 (CCQTI), 176 to 180 (CCQPS), 185 to 189 (CCSTP), 190 to 194 (CCQPT), 214 to 218 (CCRPT), 219 to 223 (CCQTT), 229 to 233 (CCRPS), 234 to 238 (CCCSP), 239 to 243 (CCVSS), and 244 to 248 (CCQPS). The interval 8 to 248 (CCQPTCCRTT…CCVSSCCQPS (241 aa)) is 32 X 5 AA repeats of C-C-[CGSVRQH]-[SQTNP]-[PTSI].

Belongs to the KRTAP type 9 family. In terms of assembly, interacts with hair keratins.

In the hair cortex, hair keratin intermediate filaments are embedded in an interfilamentous matrix, consisting of hair keratin-associated proteins (KRTAP), which are essential for the formation of a rigid and resistant hair shaft through their extensive disulfide bond cross-linking with abundant cysteine residues of hair keratins. The matrix proteins include the high-sulfur and high-glycine-tyrosine keratins. This is Keratin-associated protein 9-1 from Homo sapiens (Human).